The sequence spans 698 residues: Elongation factor G 1 (698 aa).

Positions 8–290 (ERYRNIGICA…AVIEFLPAPV (283 aa)) constitute a tr-type G domain. GTP contacts are provided by residues 17–24 (AHVDAGKT), 88–92 (DTPGH), and 142–145 (NKMD).

This sequence belongs to the TRAFAC class translation factor GTPase superfamily. Classic translation factor GTPase family. EF-G/EF-2 subfamily.

It localises to the cytoplasm. Its function is as follows. Catalyzes the GTP-dependent ribosomal translocation step during translation elongation. During this step, the ribosome changes from the pre-translocational (PRE) to the post-translocational (POST) state as the newly formed A-site-bound peptidyl-tRNA and P-site-bound deacylated tRNA move to the P and E sites, respectively. Catalyzes the coordinated movement of the two tRNA molecules, the mRNA and conformational changes in the ribosome. The polypeptide is Elongation factor G 1 (Aliivibrio fischeri (strain ATCC 700601 / ES114) (Vibrio fischeri)).